A 194-amino-acid chain; its full sequence is MLEKEEIISPALEDLKNHYRSIITLLGEDAEREGLLKTPERVAKAMLTLTKGYHMDPHEVLRSAKFQEEYSQMVIVKDIDFFSLCEHHMLPFYGKAHVAYIPNGYITGLSKIARVVDIFSHRLQVQERMTLQIKECIQETLNPLGVMVVVEAKHMCMQMRGVEKQNSVTTTSDFTGAFNQAKTREEFMNLIRQR.

Positions 85, 88, and 156 each coordinate Zn(2+).

It belongs to the GTP cyclohydrolase I family. As to quaternary structure, toroid-shaped homodecamer, composed of two pentamers of five dimers.

It catalyses the reaction GTP + H2O = 7,8-dihydroneopterin 3'-triphosphate + formate + H(+). It functions in the pathway cofactor biosynthesis; 7,8-dihydroneopterin triphosphate biosynthesis; 7,8-dihydroneopterin triphosphate from GTP: step 1/1. This is GTP cyclohydrolase 1 from Bacteroides fragilis (strain YCH46).